The following is a 341-amino-acid chain: Heat-inducible transcription repressor HrcA (341 aa).

Belongs to the HrcA family.

In terms of biological role, negative regulator of class I heat shock genes (grpE-dnaK-dnaJ and groELS operons). Prevents heat-shock induction of these operons. This is Heat-inducible transcription repressor HrcA from Brevibacillus brevis (strain 47 / JCM 6285 / NBRC 100599).